Consider the following 234-residue polypeptide: MAVGKNKRISKGKKGGKKKAADPFAKKDWYDIKAPSIFSVRNVGKTLVSRTQGTKIASEGLKHRVFEISLADLQNDEDHAYRKIRLRAEDVQGKNVLTNFWGMDFTTDKLRSLVRKWQTLIEAHVDVKTTDNYTLRMFCIAFTKKRQNQNKKTSYAQSSQIRQIRRKMREIMTTQAASCDLKELVRKFIPEMIGREIEKATSSIYPLQNVFIRKVKILKAPKFDLGKLMEACSW.

The span at 1–18 (MAVGKNKRISKGKKGGKK) shows a compositional bias: basic residues. The segment at 1 to 20 (MAVGKNKRISKGKKGGKKKA) is disordered.

The protein belongs to the eukaryotic ribosomal protein eS1 family. Component of the small ribosomal subunit. Mature ribosomes consist of a small (40S) and a large (60S) subunit. The 40S subunit contains about 33 different proteins and 1 molecule of RNA (18S). The 60S subunit contains about 49 different proteins and 3 molecules of RNA (25S, 5.8S and 5S).

Its subcellular location is the cytoplasm. The polypeptide is Small ribosomal subunit protein eS1y (Vitis vinifera (Grape)).